Reading from the N-terminus, the 242-residue chain is Protein unc-119 homolog B-A (242 aa).

The segment covering 1 to 20 (MSGSKREAALTGQPKDERKK) has biased composition (basic and acidic residues). Residues 1 to 49 (MSGSKREAALTGQPKDERKKSGGGVINRLKARRVQGKESGTSDQSSVTP) form a disordered region. A compositionally biased stretch (polar residues) spans 38-48 (ESGTSDQSSVT). Tyr133 contributes to the tetradecanoate binding site.

This sequence belongs to the PDE6D/unc-119 family.

Functionally, myristoyl-binding protein that acts as a cargo adapter: specifically binds the myristoyl moiety of a subset of N-terminally myristoylated proteins and is required for their localization. Plays a key role in localization of proteins to the primary cilium membrane. The protein is Protein unc-119 homolog B-A (unc119b-a) of Xenopus laevis (African clawed frog).